We begin with the raw amino-acid sequence, 230 residues long: Thymine/uracil-DNA glycosylase (230 aa).

Residues Cys204, Cys211, Cys214, and Cys221 each contribute to the [4Fe-4S] cluster site.

The protein belongs to the Nth/MutY family. The cofactor is [4Fe-4S] cluster.

It catalyses the reaction Hydrolyzes mismatched double-stranded DNA and polynucleotides, releasing free thymine.. Its function is as follows. DNA glycosylase that excises thymine from T/G mismatches and uracil from U/G mismatches. Can also process T/GO and U/GO, but not A/G, T/C and U/C. Has weak AP lyase activity. This chain is Thymine/uracil-DNA glycosylase, found in Pyrobaculum aerophilum (strain ATCC 51768 / DSM 7523 / JCM 9630 / CIP 104966 / NBRC 100827 / IM2).